Reading from the N-terminus, the 160-residue chain is Putative 4-hydroxy-4-methyl-2-oxoglutarate aldolase (160 aa).

Residues 75–78 (GDQL) and R97 contribute to the substrate site. An a divalent metal cation-binding site is contributed by D98.

The protein belongs to the class II aldolase/RraA-like family. As to quaternary structure, homotrimer. A divalent metal cation is required as a cofactor.

The enzyme catalyses 4-hydroxy-4-methyl-2-oxoglutarate = 2 pyruvate. It carries out the reaction oxaloacetate + H(+) = pyruvate + CO2. In terms of biological role, catalyzes the aldol cleavage of 4-hydroxy-4-methyl-2-oxoglutarate (HMG) into 2 molecules of pyruvate. Also contains a secondary oxaloacetate (OAA) decarboxylase activity due to the common pyruvate enolate transition state formed following C-C bond cleavage in the retro-aldol and decarboxylation reactions. This chain is Putative 4-hydroxy-4-methyl-2-oxoglutarate aldolase, found in Vibrio vulnificus (strain YJ016).